The primary structure comprises 179 residues: uncharacterized protein (179 aa).

2 stretches are compositionally biased toward polar residues: residues 1–37 (PLGA…TNPG) and 60–70 (IPTQSTTTFRS). 2 disordered regions span residues 1-41 (PLGA…PSAK) and 60-82 (IPTQ…PGRR).

As to expression, component of the acid-soluble and acid-insoluble organic matrix of calcified shell layers (at protein level).

It is found in the secreted. This is an uncharacterized protein from Haliotis asinina (Donkey's ear abalone).